Here is a 378-residue protein sequence, read N- to C-terminus: Dual-specificity RNA methyltransferase RlmN (378 aa).

The active-site Proton acceptor is the E95. The Radical SAM core domain occupies 101 to 345; that stretch reads EETRGTLCVS…TTIRKTRGDD (245 aa). A disulfide bridge connects residues C108 and C350. Positions 115, 119, and 122 each coordinate [4Fe-4S] cluster. S-adenosyl-L-methionine is bound by residues 176 to 177, S208, 230 to 232, and N307; these read GE and SLH. Residue C350 is the S-methylcysteine intermediate of the active site.

It belongs to the radical SAM superfamily. RlmN family. [4Fe-4S] cluster serves as cofactor.

The protein resides in the cytoplasm. It carries out the reaction adenosine(2503) in 23S rRNA + 2 reduced [2Fe-2S]-[ferredoxin] + 2 S-adenosyl-L-methionine = 2-methyladenosine(2503) in 23S rRNA + 5'-deoxyadenosine + L-methionine + 2 oxidized [2Fe-2S]-[ferredoxin] + S-adenosyl-L-homocysteine. It catalyses the reaction adenosine(37) in tRNA + 2 reduced [2Fe-2S]-[ferredoxin] + 2 S-adenosyl-L-methionine = 2-methyladenosine(37) in tRNA + 5'-deoxyadenosine + L-methionine + 2 oxidized [2Fe-2S]-[ferredoxin] + S-adenosyl-L-homocysteine. Functionally, specifically methylates position 2 of adenine 2503 in 23S rRNA and position 2 of adenine 37 in tRNAs. m2A2503 modification seems to play a crucial role in the proofreading step occurring at the peptidyl transferase center and thus would serve to optimize ribosomal fidelity. The chain is Dual-specificity RNA methyltransferase RlmN from Burkholderia thailandensis (strain ATCC 700388 / DSM 13276 / CCUG 48851 / CIP 106301 / E264).